The chain runs to 646 residues: MNPTQTLFSPGGNSPASSPASHPSSLFPQINNCRTIRDLSQIHAVFIKSGQMRDTLAAAEILRFCATSDLHHRDLDYAHKIFNQMPQRNCFSWNTIIRGFSESDEDKALIAITLFYEMMSDEFVEPNRFTFPSVLKACAKTGKIQEGKQIHGLALKYGFGGDEFVMSNLVRMYVMCGFMKDARVLFYKNIIEKDMVVMTDRRKRDGEIVLWNVMIDGYMRLGDCKAARMLFDKMRQRSVVSWNTMISGYSLNGFFKDAVEVFREMKKGDIRPNYVTLVSVLPAISRLGSLELGEWLHLYAEDSGIRIDDVLGSALIDMYSKCGIIEKAIHVFERLPRENVITWSAMINGFAIHGQAGDAIDCFCKMRQAGVRPSDVAYINLLTACSHGGLVEEGRRYFSQMVSVDGLEPRIEHYGCMVDLLGRSGLLDEAEEFILNMPIKPDDVIWKALLGACRMQGNVEMGKRVANILMDMVPHDSGAYVALSNMYASQGNWSEVSEMRLRMKEKDIRKDPGCSLIDIDGVLHEFVVEDDSHPKAKEINSMLVEISDKLRLAGYRPITTQVLLNLEEEDKENVLHYHSEKIATAFGLISTSPGKPIRIVKNLRICEDCHSSIKLISKVYKRKITVRDRKRFHHFQDGSCSCMDYW.

A disordered region spans residues 1 to 24 (MNPTQTLFSPGGNSPASSPASHPS). Positions 9-24 (SPGGNSPASSPASHPS) are enriched in low complexity. PPR repeat units follow at residues 54-88 (DTLA…MPQR), 89-126 (NCFS…FVEP), 127-161 (NRFT…GFGG), 162-197 (DEFV…DMVV), 207-237 (EIVL…MRQR), 238-272 (SVVS…DIRP), 273-307 (NYVT…GIRI), 308-338 (DDVL…LPRE), 339-373 (NVIT…GVRP), 374-409 (SDVA…GLEP), and 410-440 (RIEH…MPIK). The interval 445–520 (IWKALLGACR…DPGCSLIDID (76 aa)) is type E motif. A type E(+) motif region spans residues 521 to 551 (GVLHEFVVEDDSHPKAKEINSMLVEISDKLR). Positions 552–646 (LAGYRPITTQ…DGSCSCMDYW (95 aa)) are type DYW motif.

This sequence belongs to the PPR family. PCMP-H subfamily.

This chain is Pentatricopeptide repeat-containing protein At5g48910 (PCMP-H38), found in Arabidopsis thaliana (Mouse-ear cress).